The sequence spans 164 residues: Transcription elongation factor GreA (164 aa).

Residues 12–38 adopt a coiled-coil conformation; the sequence is RRLERELERLKKERPGVILAIKEAREE.

This sequence belongs to the GreA/GreB family.

Functionally, necessary for efficient RNA polymerase transcription elongation past template-encoded arresting sites. The arresting sites in DNA have the property of trapping a certain fraction of elongating RNA polymerases that pass through, resulting in locked ternary complexes. Cleavage of the nascent transcript by cleavage factors such as GreA or GreB allows the resumption of elongation from the new 3'terminus. GreA releases sequences of 2 to 3 nucleotides. This Solidesulfovibrio magneticus (strain ATCC 700980 / DSM 13731 / RS-1) (Desulfovibrio magneticus) protein is Transcription elongation factor GreA.